The following is a 138-amino-acid chain: MGDKTRVQVSKLKPGRYILIDDEPCRIANITVSSPGKHGSAKARIEAVGIFDGKVRSIVKPTSAEVDVPIIDKKTGQIIAITPDTVQLMDMETYDLFDVPIATGVNEEIKDKLKEGINVEYWETLGRIKIMKLKGESS.

The residue at position 37 (Lys-37) is a Hypusine.

It belongs to the eIF-5A family.

Its subcellular location is the cytoplasm. Functions by promoting the formation of the first peptide bond. This is Translation initiation factor 5A (eIF5A) from Thermococcus sibiricus (strain DSM 12597 / MM 739).